The following is a 376-amino-acid chain: TraB domain-containing protein (376 aa).

Met-1 is subject to N-acetylmethionine. The tract at residues 1 to 34 (MDGEEQQPPHEANVEPVVPSEASEPVPRVLSGDP) is disordered. Over residues 14–27 (VEPVVPSEASEPVP) the composition is skewed to low complexity. Position 65 is a phosphothreonine (Thr-65).

The sequence is that of TraB domain-containing protein (TRABD) from Homo sapiens (Human).